Reading from the N-terminus, the 264-residue chain is Acyl-[acyl-carrier-protein]--UDP-N-acetylglucosamine O-acyltransferase (264 aa).

Belongs to the transferase hexapeptide repeat family. LpxA subfamily. As to quaternary structure, homotrimer.

It is found in the cytoplasm. It carries out the reaction a (3R)-hydroxyacyl-[ACP] + UDP-N-acetyl-alpha-D-glucosamine = a UDP-3-O-[(3R)-3-hydroxyacyl]-N-acetyl-alpha-D-glucosamine + holo-[ACP]. It functions in the pathway glycolipid biosynthesis; lipid IV(A) biosynthesis; lipid IV(A) from (3R)-3-hydroxytetradecanoyl-[acyl-carrier-protein] and UDP-N-acetyl-alpha-D-glucosamine: step 1/6. Functionally, involved in the biosynthesis of lipid A, a phosphorylated glycolipid that anchors the lipopolysaccharide to the outer membrane of the cell. The protein is Acyl-[acyl-carrier-protein]--UDP-N-acetylglucosamine O-acyltransferase of Chlorobium phaeobacteroides (strain DSM 266 / SMG 266 / 2430).